The following is a 389-amino-acid chain: Na(+)/H(+) antiporter NhaA (389 aa).

11 helical membrane passes run 17–37 (ILLL…LAGF), 59–79 (LLLW…GLEV), 95–115 (SLPT…YLLF), 124–144 (AGWA…MALL), 154–174 (VFLL…IALF), 177–197 (SDLS…LVAL), 213–233 (LILW…GVII), 261–281 (FLIL…NMSL), 292–312 (IALG…FVAV), 328–348 (IAPV…IASL), and 363–383 (LGTL…LSKV).

This sequence belongs to the NhaA Na(+)/H(+) (TC 2.A.33) antiporter family.

Its subcellular location is the cell inner membrane. It catalyses the reaction Na(+)(in) + 2 H(+)(out) = Na(+)(out) + 2 H(+)(in). Functionally, na(+)/H(+) antiporter that extrudes sodium in exchange for external protons. The protein is Na(+)/H(+) antiporter NhaA of Shewanella oneidensis (strain ATCC 700550 / JCM 31522 / CIP 106686 / LMG 19005 / NCIMB 14063 / MR-1).